We begin with the raw amino-acid sequence, 63 residues long: Conotoxin Tx-D0111 (63 aa).

Residues 1-19 (MRCLPVFVILLLLIASTPS) form the signal peptide. The propeptide occupies 20 to 47 (DTVPLKTKDDMPQASFHGNARRTLQMLS).

Belongs to the conotoxin T superfamily. Contains 2 disulfide bonds that can be either 'C1-C3, C2-C4' or 'C1-C4, C2-C3', since these disulfide connectivities have been observed for conotoxins with cysteine framework V (for examples, see AC P0DQQ7 and AC P81755). As to expression, expressed by the venom duct.

It is found in the secreted. This Conus textile (Cloth-of-gold cone) protein is Conotoxin Tx-D0111.